Consider the following 181-residue polypeptide: Acetolactate synthase small subunit (181 aa).

In terms of domain architecture, ACT spans 4-78 (TLSVLVEDES…NVLKIQDITN (75 aa)).

Belongs to the acetolactate synthase small subunit family. In terms of assembly, dimer of large and small chains.

It localises to the plastid. Its subcellular location is the chloroplast. It carries out the reaction 2 pyruvate + H(+) = (2S)-2-acetolactate + CO2. It functions in the pathway amino-acid biosynthesis; L-isoleucine biosynthesis; L-isoleucine from 2-oxobutanoate: step 1/4. Its pathway is amino-acid biosynthesis; L-valine biosynthesis; L-valine from pyruvate: step 1/4. The protein is Acetolactate synthase small subunit (ilvH) of Galdieria sulphuraria (Red alga).